The following is a 1020-amino-acid chain: Contactin-1 (1020 aa).

The N-terminal stretch at 1–20 (MKMPLLVSHLLLISLTSCLG) is a signal peptide. Ig-like C2-type domains follow at residues 41-131 (PIFE…ATLS), 137-223 (PFPP…KSVF), 241-326 (PADI…ARIY), 331-407 (PEWV…AELK), 413-500 (PTFE…GTLV), and 504-603 (PTRI…LVVR). 2 disulfides stabilise this stretch: C65–C114 and C158–C211. N-linked (GlcNAc...) asparagine glycosylation is found at N208 and N258. A disulfide bridge connects residues C263 and C310. N338 carries an N-linked (GlcNAc...) asparagine glycan. Intrachain disulfides connect C352–C391 and C436–C484. N-linked (GlcNAc...) asparagine glycosylation is found at N457, N473, N494, and N521. Residues C526 and C585 are joined by a disulfide bond. N-linked (GlcNAc...) asparagine glycosylation is present at N593. Fibronectin type-III domains follow at residues 608 to 706 (PPGG…TDGA), 711 to 808 (APSD…SAQD), 813 to 908 (APTE…APPS), and 909 to 1002 (QPPR…TLSS). Residues 695–719 (SIPSNRIKTDGAAPNVAPSDVGGGG) form a disordered region. An N-linked (GlcNAc...) asparagine glycan is attached at N935. S1001 carries the GPI-anchor amidated serine lipid modification. A propeptide spans 1002 to 1020 (SSLLSLLLPSLGFLVYSEF) (removed in mature form).

The protein belongs to the immunoglobulin superfamily. Contactin family. As to quaternary structure, monomer. Interacts with CNTNAP1 in cis form. Binds to the carbonic-anhydrase like domain of PTPRZ1. Interacts with NOTCH1 and TNR. Detected in a complex with NRCAM and PTPRB. Interacts with TASOR. In terms of tissue distribution, expressed in the ovary and in Sertoli cells of the testis.

Its subcellular location is the cell membrane. Functionally, contactins mediate cell surface interactions during nervous system development. Involved in the formation of paranodal axo-glial junctions in myelinated peripheral nerves and in the signaling between axons and myelinating glial cells via its association with CNTNAP1. Participates in oligodendrocytes generation by acting as a ligand of NOTCH1. Its association with NOTCH1 promotes NOTCH1 activation through the released notch intracellular domain (NICD) and subsequent translocation to the nucleus. Interaction with TNR induces a repulsion of neurons and an inhibition of neurite outgrowth. This Mus musculus (Mouse) protein is Contactin-1 (Cntn1).